A 194-amino-acid polypeptide reads, in one-letter code: Fe/S biogenesis protein NfuA (194 aa).

Cysteine 151 and cysteine 154 together coordinate [4Fe-4S] cluster.

The protein belongs to the NfuA family. As to quaternary structure, homodimer. It depends on [4Fe-4S] cluster as a cofactor.

In terms of biological role, involved in iron-sulfur cluster biogenesis. Binds a 4Fe-4S cluster, can transfer this cluster to apoproteins, and thereby intervenes in the maturation of Fe/S proteins. Could also act as a scaffold/chaperone for damaged Fe/S proteins. This Aliivibrio fischeri (strain ATCC 700601 / ES114) (Vibrio fischeri) protein is Fe/S biogenesis protein NfuA.